Reading from the N-terminus, the 181-residue chain is Probable pyruvoyl-dependent arginine decarboxylase (181 aa).

At Ser43 the chain carries Pyruvic acid (Ser).

This sequence belongs to the PdaD family. It depends on pyruvate as a cofactor.

It carries out the reaction L-arginine + H(+) = agmatine + CO2. The chain is Probable pyruvoyl-dependent arginine decarboxylase from Chlorobaculum tepidum (strain ATCC 49652 / DSM 12025 / NBRC 103806 / TLS) (Chlorobium tepidum).